Here is an 85-residue protein sequence, read N- to C-terminus: Sec-independent protein translocase protein TatA (85 aa).

Residues methionine 1 to glycine 21 traverse the membrane as a helical segment. The interval methionine 43–alanine 85 is disordered. The span at glutamate 46–alanine 57 shows a compositional bias: basic and acidic residues. Residues alanine 58 to alanine 73 show a composition bias toward low complexity. Residues threonine 74 to alanine 85 are compositionally biased toward basic and acidic residues.

This sequence belongs to the TatA/E family. The Tat system comprises two distinct complexes: a TatABC complex, containing multiple copies of TatA, TatB and TatC subunits, and a separate TatA complex, containing only TatA subunits. Substrates initially bind to the TatABC complex, which probably triggers association of the separate TatA complex to form the active translocon.

The protein resides in the cell inner membrane. Part of the twin-arginine translocation (Tat) system that transports large folded proteins containing a characteristic twin-arginine motif in their signal peptide across membranes. TatA could form the protein-conducting channel of the Tat system. This Shewanella sp. (strain MR-4) protein is Sec-independent protein translocase protein TatA.